The following is a 163-amino-acid chain: Large ribosomal subunit protein uL10 (163 aa).

This sequence belongs to the universal ribosomal protein uL10 family. In terms of assembly, part of the ribosomal stalk of the 50S ribosomal subunit. The N-terminus interacts with L11 and the large rRNA to form the base of the stalk. The C-terminus forms an elongated spine to which L12 dimers bind in a sequential fashion forming a multimeric L10(L12)X complex.

Its function is as follows. Forms part of the ribosomal stalk, playing a central role in the interaction of the ribosome with GTP-bound translation factors. This Actinobacillus pleuropneumoniae serotype 5b (strain L20) protein is Large ribosomal subunit protein uL10.